A 35-amino-acid polypeptide reads, in one-letter code: Conotoxin TxMEKL-0422 (35 aa).

Residues 1 to 35 are disordered; that stretch reads NPASCCSCADVDPGRASRKTPKGEDQVFIKEKDRC. The segment covering 21–35 has biased composition (basic and acidic residues); sequence PKGEDQVFIKEKDRC.

Post-translationally, contains disulfide bonds. Expressed by the venom duct.

The protein resides in the secreted. This is Conotoxin TxMEKL-0422 from Conus textile (Cloth-of-gold cone).